Here is a 20-residue protein sequence, read N- to C-terminus: Dahlein-5.3 (20 aa).

Expressed by the skin dorsal glands.

It is found in the secreted. In terms of biological role, has no antimicrobial activity. Strongly inhibits the formation of NO by neuronal nitric oxide synthase at micromolar concentrations. The sequence is that of Dahlein-5.3 from Ranoidea dahlii (Dahl's aquatic frog).